A 727-amino-acid chain; its full sequence is Catalase-peroxidase (727 aa).

The interval 1 to 26 (MDTKVETGGKCPVAHGPAGAKGRGNR) is disordered. The segment at residues 97-219 (WHSAGTYRIT…LGAVQMGLIY (123 aa)) is a cross-link (tryptophyl-tyrosyl-methioninium (Trp-Tyr) (with M-245)). The active-site Proton acceptor is the histidine 98. A cross-link (tryptophyl-tyrosyl-methioninium (Tyr-Met) (with W-97)) is located at residues 219–245 (YVNPEGPNGNPDPIAAARDIRETFSRM). Heme b is bound at residue histidine 260.

This sequence belongs to the peroxidase family. Peroxidase/catalase subfamily. As to quaternary structure, homodimer or homotetramer. It depends on heme b as a cofactor. Formation of the three residue Trp-Tyr-Met cross-link is important for the catalase, but not the peroxidase activity of the enzyme.

It catalyses the reaction H2O2 + AH2 = A + 2 H2O. It carries out the reaction 2 H2O2 = O2 + 2 H2O. In terms of biological role, bifunctional enzyme with both catalase and broad-spectrum peroxidase activity. This Allorhizobium ampelinum (strain ATCC BAA-846 / DSM 112012 / S4) (Agrobacterium vitis (strain S4)) protein is Catalase-peroxidase.